A 325-amino-acid polypeptide reads, in one-letter code: GMP reductase (325 aa).

Catalysis depends on Cys-174, which acts as the Thioimidate intermediate. Residue 203–226 participates in NADP(+) binding; the sequence is LIADGGIRTHGDIAKSIRFGASMV.

This sequence belongs to the IMPDH/GMPR family. GuaC type 2 subfamily.

It carries out the reaction IMP + NH4(+) + NADP(+) = GMP + NADPH + 2 H(+). Functionally, catalyzes the irreversible NADPH-dependent deamination of GMP to IMP. It functions in the conversion of nucleobase, nucleoside and nucleotide derivatives of G to A nucleotides, and in maintaining the intracellular balance of A and G nucleotides. This Staphylococcus aureus (strain bovine RF122 / ET3-1) protein is GMP reductase.